Here is a 353-residue protein sequence, read N- to C-terminus: MTVVAPGSVVFRNICKQFGAFTAIPDLSLTIEPGTLVTLLGPSGCGKTTTLRMLAGLEHPTSGRILIGGKDVTMLPANERDVSMVFQSYALFPHMNALDNVAYGLESSGMRRKEARERAEEGLALVGLPGMGQRLPAELSGGQQQRVAVARALVLEPQVLLLDEPLSNLDARLRRRVRTEIRELQQRLGFTAVYVTHDQDEALAVSDRIIVMKDGNIAQEGPPRELYETPASAFIADFMGEANVVACDVIDVDGHEATIRVERLTHRVSGRGMRPGPAKLAVRPNAITLEPSAAGSFSGEITHTAYLGDHVEYEVKTAAGTLFVVDPAVERALAPQTNVAIAFKERGIALING.

The ABC transporter domain occupies 9–239 (VVFRNICKQF…PASAFIADFM (231 aa)). 41–48 (GPSGCGKT) contacts ATP.

This sequence belongs to the ABC transporter superfamily. Fe(3+) ion importer (TC 3.A.1.10) family. In terms of assembly, the complex is composed of two ATP-binding proteins (FbpC), two transmembrane proteins (FbpB) and a solute-binding protein (FbpA).

The protein localises to the cell inner membrane. The enzyme catalyses Fe(3+)(out) + ATP + H2O = Fe(3+)(in) + ADP + phosphate + H(+). Part of the ABC transporter complex FbpABC involved in Fe(3+) ions import. Responsible for energy coupling to the transport system. The chain is Fe(3+) ions import ATP-binding protein FbpC 1 from Rhizobium meliloti (strain 1021) (Ensifer meliloti).